We begin with the raw amino-acid sequence, 166 residues long: Regulatory protein RecX (166 aa).

It belongs to the RecX family.

The protein resides in the cytoplasm. Functionally, modulates RecA activity. This is Regulatory protein RecX from Shigella dysenteriae serotype 1 (strain Sd197).